A 444-amino-acid polypeptide reads, in one-letter code: Nuclear distribution protein nudF (444 aa).

In terms of domain architecture, LisH spans 9-41 (QAEALHKAMLAYLSVINAPQTAETLREELHFDE). Residues 60–88 (TGIARLQRRINDLEAEVRSLQAELEASPS) adopt a coiled-coil conformation. Positions 83–107 (LEASPSAARAKNQDPTNWLPKPSST) are disordered. WD repeat units lie at residues 112 to 153 (SHRD…RTLK), 155 to 195 (HIRG…ANIR), 199 to 239 (GHDH…CVKV), 243 to 282 (ATES…PKAA), 285 to 345 (GHEN…IKTL), 347 to 386 (GHDN…RLVK), and 391 to 437 (AHEH…GCAD).

It belongs to the WD repeat LIS1/nudF family. Interacts with dynein. Self-associates. Interacts with bnfA, nudC and nudE.

Its subcellular location is the cytoplasm. The protein resides in the cytoskeleton. The protein localises to the spindle pole. In terms of biological role, positively regulates the activity of the minus-end directed microtubule motor protein dynein. May enhance dynein-mediated microtubule sliding by targeting dynein to the microtubule plus end. Required for nuclear migration during vegetative growth as well as development. Required for retrograde early endosome (EE) transport from the hyphal tip. Required for localization of dynein to the mitotic spindle poles. Recruits additional proteins to the dynein complex at SPBs. The chain is Nuclear distribution protein nudF from Emericella nidulans (strain FGSC A4 / ATCC 38163 / CBS 112.46 / NRRL 194 / M139) (Aspergillus nidulans).